The following is a 428-amino-acid chain: Histidine--tRNA ligase (428 aa).

The protein belongs to the class-II aminoacyl-tRNA synthetase family. Homodimer.

The protein localises to the cytoplasm. The catalysed reaction is tRNA(His) + L-histidine + ATP = L-histidyl-tRNA(His) + AMP + diphosphate + H(+). The protein is Histidine--tRNA ligase of Bordetella pertussis (strain Tohama I / ATCC BAA-589 / NCTC 13251).